The chain runs to 357 residues: Holliday junction branch migration complex subunit RuvB (357 aa).

The large ATPase domain (RuvB-L) stretch occupies residues 4-195 (TDKLAAKAVS…FGIVARLEFY (192 aa)). Residues L34, R35, G76, K79, T80, T81, 142 to 144 (EDY), R185, Y195, and R232 each bind ATP. Residue T80 participates in Mg(2+) binding. Positions 196–266 (TPAELAKIVT…VADAALAMLD (71 aa)) are small ATPAse domain (RuvB-S). Residues 269–357 (AVGFDLMDRK…PVRDLWDDNQ (89 aa)) form a head domain (RuvB-H) region. The DNA site is built by R305, R324, and R329.

It belongs to the RuvB family. In terms of assembly, homohexamer. Forms an RuvA(8)-RuvB(12)-Holliday junction (HJ) complex. HJ DNA is sandwiched between 2 RuvA tetramers; dsDNA enters through RuvA and exits via RuvB. An RuvB hexamer assembles on each DNA strand where it exits the tetramer. Each RuvB hexamer is contacted by two RuvA subunits (via domain III) on 2 adjacent RuvB subunits; this complex drives branch migration. In the full resolvosome a probable DNA-RuvA(4)-RuvB(12)-RuvC(2) complex forms which resolves the HJ.

The protein resides in the cytoplasm. The enzyme catalyses ATP + H2O = ADP + phosphate + H(+). Functionally, the RuvA-RuvB-RuvC complex processes Holliday junction (HJ) DNA during genetic recombination and DNA repair, while the RuvA-RuvB complex plays an important role in the rescue of blocked DNA replication forks via replication fork reversal (RFR). RuvA specifically binds to HJ cruciform DNA, conferring on it an open structure. The RuvB hexamer acts as an ATP-dependent pump, pulling dsDNA into and through the RuvAB complex. RuvB forms 2 homohexamers on either side of HJ DNA bound by 1 or 2 RuvA tetramers; 4 subunits per hexamer contact DNA at a time. Coordinated motions by a converter formed by DNA-disengaged RuvB subunits stimulates ATP hydrolysis and nucleotide exchange. Immobilization of the converter enables RuvB to convert the ATP-contained energy into a lever motion, pulling 2 nucleotides of DNA out of the RuvA tetramer per ATP hydrolyzed, thus driving DNA branch migration. The RuvB motors rotate together with the DNA substrate, which together with the progressing nucleotide cycle form the mechanistic basis for DNA recombination by continuous HJ branch migration. Branch migration allows RuvC to scan DNA until it finds its consensus sequence, where it cleaves and resolves cruciform DNA. In Ralstonia pickettii (strain 12J), this protein is Holliday junction branch migration complex subunit RuvB.